We begin with the raw amino-acid sequence, 166 residues long: HTH-type transcriptional regulator PecS (166 aa).

In terms of domain architecture, HTH marR-type spans 25–160 (PMLVIGTLSR…LRALLGRVEK (136 aa)).

The protein resides in the cytoplasm. The presence of PecM is required to ensure the full regulation of the pecS-pecM intergenic region by PecS. Negatively regulates the expression of genes encoding pectinase and cellulase, which play a major role in virulence, and the expression of the blue pigment indigoidine, which is implicated in pathogenicity and protection from oxidative stress. Represses the expression of genes involved in indigoidine biosynthesis by binding to indA and indC promoter regions. Also binds to promoter sites in the pecS-pecM intergenic region and negatively autoregulates its expression as well as that of pecM. This Dickeya dadantii (strain 3937) (Erwinia chrysanthemi (strain 3937)) protein is HTH-type transcriptional regulator PecS.